The primary structure comprises 249 residues: MEAQQDFTKHPEVAQDRLVLYVRKAIPAPTANSLKPLMILEALEIPYSIHLISSLSQETWYHEINPYKQLPALEDIDLVETSGGSKRRLNVFDSSAMLIYLCDKHDKDGLFIGRNATERAQVTSWLIAYAAGLGATGEWWLKMRHDENLKPALRVIENAIRREYDILEKRLGEPGQRWIALADRPTVADFAIQPLANPRVARNAAIDFEAWPRTKAWSEAVDRLAYIDRAKRLNNKLGMTEEEIELHGR.

Residues 20 to 109 enclose the GST N-terminal domain; sequence LYVRKAIPAP…YLCDKHDKDG (90 aa). Residues 115–249 form the GST C-terminal domain; sequence NATERAQVTS…TEEEIELHGR (135 aa).

It belongs to the GST superfamily.

It carries out the reaction RX + glutathione = an S-substituted glutathione + a halide anion + H(+). It functions in the pathway secondary metabolite biosynthesis. In terms of biological role, glutathione S-transferase; part of the gene cluster that mediates the biosynthesis of an unusual class of epipolythiodioxopiperazines (ETPs) lacking the reactive thiol group important for toxicity. Firstly, L-tyrosine is prenylated by tcpD, before undergoing condensation with L-glycine in a reaction catalyzed by the NRPS tcpP leading to the diketopiperazine (DKP) backbone. Afterwards the alpha-carbon of tyrosine is oxidized by the cytochrome P450 tcpC to form a hydroxyl group. However, in contrast other ETP biosynthesis pathways studied so far, tcpC is not able to bishydroxylate the DKP at both alpha-carbon positions, but hydroxylates the alpha-carbon of the tyrosine part and the nitrogen of the glycine part. The next steps involve an alpha,beta-elimination reaction catalyzed by tcpI, a methylation by the methyltransferase tcpN the action of the four enzyme cascade tcpG/K/J/I. Due to a dysfunctional cytochrome P450 monooxygenase tcpC, the pathway leads to the biosynthesis of probable non-toxic metabolites lacking the reactive thiol group. The protein is Glutathione S-transferase tcpG of Claviceps purpurea (strain 20.1) (Ergot fungus).